The primary structure comprises 336 residues: Ribosomal RNA large subunit methyltransferase F (336 aa).

The disordered stretch occupies residues 1-24; it reads MPRPTSPHPDAERKSASPLHPRNR.

The protein belongs to the methyltransferase superfamily. METTL16/RlmF family.

It localises to the cytoplasm. It carries out the reaction adenosine(1618) in 23S rRNA + S-adenosyl-L-methionine = N(6)-methyladenosine(1618) in 23S rRNA + S-adenosyl-L-homocysteine + H(+). Its function is as follows. Specifically methylates the adenine in position 1618 of 23S rRNA. The sequence is that of Ribosomal RNA large subunit methyltransferase F from Pseudomonas aeruginosa (strain LESB58).